We begin with the raw amino-acid sequence, 671 residues long: MKRFAALSLAALMLLTVFASAASAVDVIEIRGPVYNGSDIDDIIDTYGDGTILTMDATDFAAFYYDIDDNVTTETLSIEDVPDTEGNVIGEGGLIYETTIQEVEYEYYNPDAGWDNYSLMGFFAEKYIPINPDKADKLSKLILDSDDKYTIRTGEMLDLGEGYAIEAKQVDVDGEKVWLEFTKDGEFVDDEIISVSTADDEANTWDVELDDIEDEDDVIVLKVHVNQVFQGAVDSIAQIEGLWLIDYANAMTIESDDEFGNLDDVSIDGDTLTITNEDTFTLTRDDEEEIGEGLYFATADTPSNVLRFYAMKEITDPGTYEIRGQVASGFGDQSWDASSFAGFYYDIDDNVSTETLTVSDLDGNVIPEGGLVYTTTIADVDFEYYNPDAGWDQYPVMGFFAEEYIPINPDKADKIAKLVLDSDDKYTIRTGEMLDLGEGYAIEAKQVDVDGEKVWLEFTKDGEFVDDEIISVSTADDEANTWDVELDDIEDEDDVVVLKVHVNQVFQGAVDSIAQIEGLWLIDYANAMTIESDDEFGNLDDVSIDGDTLKISNEDTFTLTRDSEEEIGEGMYFMIADTSSSDLRYYPYVEKTIGEEVSGEEETPEETPTGEVTETEGEEETPTEVTETPTEGEPAPEETETTESEGTTPGFGFMFGLVGLLAVVYLVRRNN.

A signal peptide spans 1–24 (MKRFAALSLAALMLLTVFASAASA). 4 N-linked (GlcNAc...) asparagine glycosylation sites follow: asparagine 36, asparagine 70, asparagine 116, and asparagine 350. A disordered region spans residues 594–650 (GEEVSGEEETPEETPTGEVTETEGEEETPTEVTETPTEGEPAPEETETTESEGTTPG). Positions 613–622 (TETEGEEETP) are enriched in acidic residues. The span at 623 to 633 (TEVTETPTEGE) shows a compositional bias: low complexity. A compositionally biased stretch (acidic residues) spans 634–643 (PAPEETETTE). A helical membrane pass occupies residues 647-667 (TTPGFGFMFGLVGLLAVVYLV).

Belongs to the Methanosarcinales S-layer protein family. Post-translationally, glycosylated.

It is found in the secreted. It localises to the cell wall. The protein localises to the S-layer. The protein resides in the cell membrane. Its function is as follows. S-layer protein. The S-layer is a paracrystalline mono-layered assembly of proteins which coat the surface of the cell. The chain is Major S-layer protein from Methanosarcina acetivorans (strain ATCC 35395 / DSM 2834 / JCM 12185 / C2A).